The chain runs to 188 residues: Adenylate kinase (188 aa).

12–17 (GVGKGT) contributes to the ATP binding site. The segment at 32-61 (STGDIFRSAMANHTELGDKAKSFMDAGNLV) is NMP. AMP-binding positions include Thr-33, Arg-38, 59–61 (NLV), 89–92 (GYPR), and Gln-96. Residues 130 to 136 (GRGREDD) are LID. Arg-131 provides a ligand contact to ATP. AMP-binding residues include Arg-133 and Arg-144. Gly-172 contributes to the ATP binding site.

Belongs to the adenylate kinase family. Monomer.

It localises to the cytoplasm. It carries out the reaction AMP + ATP = 2 ADP. It functions in the pathway purine metabolism; AMP biosynthesis via salvage pathway; AMP from ADP: step 1/1. In terms of biological role, catalyzes the reversible transfer of the terminal phosphate group between ATP and AMP. Plays an important role in cellular energy homeostasis and in adenine nucleotide metabolism. In Oenococcus oeni (strain ATCC BAA-331 / PSU-1), this protein is Adenylate kinase.